Here is a 304-residue protein sequence, read N- to C-terminus: PTB domain-containing engulfment adapter protein 1 (304 aa).

Position 16 is a phosphothreonine (threonine 16). Residues 21-176 (SKHYIPYNAK…AGMQKRIQDL (156 aa)) enclose the PID domain. Residues 159–200 (DVETRKQIAGMQKRIQDLETENMELKNKVQDLESRLRTTQVS) are a coiled coil. Serine 223 is subject to Phosphoserine.

It belongs to the ced-6 family. Homodimer. Interacts with clathrin and MEGF10. Interacts with GDP-bound ARF6, but not with GTP-bound ARF6. Part of a complex composed of GULP1, ACAP1 and ARF6. Interacts with ACAP1, LRP1 and STAB2. As to expression, detected throughout the brain, particularly in Purkinje cells, hippocampal and cortical neurons (at protein level).

The protein localises to the cytoplasm. Its function is as follows. Modulates cellular glycosphingolipid and cholesterol transport. May play a role in the internalization of various LRP1 ligands, such as PSAP. May function as an adapter protein. Required for efficient phagocytosis of apoptotic cells. Increases cellular levels of GTP-bound ARF6. The chain is PTB domain-containing engulfment adapter protein 1 (Gulp1) from Mus musculus (Mouse).